The primary structure comprises 209 residues: 8-oxoguanine DNA glycosylase/AP lyase (209 aa).

Catalysis depends on residues lysine 132 and aspartate 150.

The protein belongs to the type-2 OGG1 family.

It carries out the reaction 2'-deoxyribonucleotide-(2'-deoxyribose 5'-phosphate)-2'-deoxyribonucleotide-DNA = a 3'-end 2'-deoxyribonucleotide-(2,3-dehydro-2,3-deoxyribose 5'-phosphate)-DNA + a 5'-end 5'-phospho-2'-deoxyribonucleoside-DNA + H(+). Catalyzes the excision of an oxidatively damaged form of guanine (7,8-dihydro-8-oxoguanine = 8-oxoG) from DNA. Also cleaves the DNA backbone at apurinic/apyrimidinic sites (AP sites). The sequence is that of 8-oxoguanine DNA glycosylase/AP lyase from Picrophilus torridus (strain ATCC 700027 / DSM 9790 / JCM 10055 / NBRC 100828 / KAW 2/3).